We begin with the raw amino-acid sequence, 205 residues long: Cytochrome c biogenesis ATP-binding export protein CcmA (205 aa).

The region spanning 2–204 (LEVSNLTAIR…SPKLRKIKLG (203 aa)) is the ABC transporter domain. 34-41 (GRNGTGKT) lines the ATP pocket.

It belongs to the ABC transporter superfamily. CcmA exporter (TC 3.A.1.107) family. As to quaternary structure, the complex is composed of two ATP-binding proteins (CcmA) and two transmembrane proteins (CcmB).

The protein resides in the cell inner membrane. It catalyses the reaction heme b(in) + ATP + H2O = heme b(out) + ADP + phosphate + H(+). Its function is as follows. Part of the ABC transporter complex CcmAB involved in the biogenesis of c-type cytochromes; once thought to export heme, this seems not to be the case, but its exact role is uncertain. Responsible for energy coupling to the transport system. The sequence is that of Cytochrome c biogenesis ATP-binding export protein CcmA from Vibrio parahaemolyticus serotype O3:K6 (strain RIMD 2210633).